The following is a 684-amino-acid chain: Probable phosphoenolpyruvate synthase (684 aa).

His424 serves as the catalytic Tele-phosphohistidine intermediate. Substrate is bound by residues Arg517, Arg564, and Glu661. Glu661 contributes to the Mg(2+) binding site.

It belongs to the PEP-utilizing enzyme family. Requires Mg(2+) as cofactor.

The enzyme catalyses pyruvate + ATP + H2O = phosphoenolpyruvate + AMP + phosphate + 2 H(+). Its pathway is carbohydrate biosynthesis; gluconeogenesis. Its function is as follows. Catalyzes the phosphorylation of pyruvate to phosphoenolpyruvate. This Methanothermobacter thermautotrophicus (strain ATCC 29096 / DSM 1053 / JCM 10044 / NBRC 100330 / Delta H) (Methanobacterium thermoautotrophicum) protein is Probable phosphoenolpyruvate synthase (ppsA).